The chain runs to 528 residues: Probable protein phosphatase 2C 51 (528 aa).

Residues 8–28 form a helical membrane-spanning segment; sequence SLLNLGLLIIFFVFFFLVINC. Residues 71–445 enclose the PPM-type phosphatase domain; the sequence is RCHTAAIQGR…DNMAAVVVPL (375 aa). Mn(2+) contacts are provided by aspartate 117, glycine 118, aspartate 385, and aspartate 436.

It belongs to the PP2C family. It depends on Mg(2+) as a cofactor. Mn(2+) serves as cofactor.

The protein resides in the membrane. The catalysed reaction is O-phospho-L-seryl-[protein] + H2O = L-seryl-[protein] + phosphate. It carries out the reaction O-phospho-L-threonyl-[protein] + H2O = L-threonyl-[protein] + phosphate. This Arabidopsis thaliana (Mouse-ear cress) protein is Probable protein phosphatase 2C 51.